A 284-amino-acid polypeptide reads, in one-letter code: NH(3)-dependent NAD(+) synthetase (284 aa).

51–58 (GISGGIDS) provides a ligand contact to ATP. Aspartate 57 serves as a coordination point for Mg(2+). Residue arginine 148 coordinates deamido-NAD(+). Threonine 168 contributes to the ATP binding site. Residue glutamate 173 participates in Mg(2+) binding. Deamido-NAD(+) contacts are provided by lysine 181 and aspartate 188. ATP is bound by residues lysine 197 and threonine 219. 268 to 269 (HK) serves as a coordination point for deamido-NAD(+).

This sequence belongs to the NAD synthetase family. As to quaternary structure, homodimer.

It catalyses the reaction deamido-NAD(+) + NH4(+) + ATP = AMP + diphosphate + NAD(+) + H(+). It participates in cofactor biosynthesis; NAD(+) biosynthesis; NAD(+) from deamido-NAD(+) (ammonia route): step 1/1. Its function is as follows. Catalyzes the ATP-dependent amidation of deamido-NAD to form NAD. Uses ammonia as a nitrogen source. This is NH(3)-dependent NAD(+) synthetase from Burkholderia pseudomallei (strain 1106a).